A 392-amino-acid chain; its full sequence is Putative cystathionine gamma-lyase (392 aa).

Over residues 1–10 (MSDSATTDSA) the composition is skewed to polar residues. The disordered stretch occupies residues 1 to 41 (MSDSATTDSAGTGGERSASAPGDGTRAVRAGLPEPVKHEPT). K216 carries the N6-(pyridoxal phosphate)lysine modification.

Belongs to the trans-sulfuration enzymes family. Pyridoxal 5'-phosphate is required as a cofactor.

The protein resides in the cytoplasm. It catalyses the reaction L,L-cystathionine + H2O = 2-oxobutanoate + L-cysteine + NH4(+). Its pathway is amino-acid biosynthesis; L-cysteine biosynthesis; L-cysteine from L-homocysteine and L-serine: step 2/2. The protein is Putative cystathionine gamma-lyase (cysA) of Streptomyces coelicolor (strain ATCC BAA-471 / A3(2) / M145).